Here is a 326-residue protein sequence, read N- to C-terminus: DNA-directed RNA polymerase subunit alpha (326 aa).

The alpha N-terminal domain (alpha-NTD) stretch occupies residues 1–231 (MQTALLKPKI…DQLSVFAALE (231 aa)). The tract at residues 247-326 (IDPILLRPVD…ENWPPAGLDK (80 aa)) is alpha C-terminal domain (alpha-CTD).

The protein belongs to the RNA polymerase alpha chain family. In terms of assembly, homodimer. The RNAP catalytic core consists of 2 alpha, 1 beta, 1 beta' and 1 omega subunit. When a sigma factor is associated with the core the holoenzyme is formed, which can initiate transcription.

It catalyses the reaction RNA(n) + a ribonucleoside 5'-triphosphate = RNA(n+1) + diphosphate. Its function is as follows. DNA-dependent RNA polymerase catalyzes the transcription of DNA into RNA using the four ribonucleoside triphosphates as substrates. This chain is DNA-directed RNA polymerase subunit alpha, found in Cupriavidus pinatubonensis (strain JMP 134 / LMG 1197) (Cupriavidus necator (strain JMP 134)).